The primary structure comprises 494 residues: UDP-N-acetylmuramate--L-alanine ligase (494 aa).

Gly-122–Thr-128 provides a ligand contact to ATP.

The protein belongs to the MurCDEF family.

Its subcellular location is the cytoplasm. It catalyses the reaction UDP-N-acetyl-alpha-D-muramate + L-alanine + ATP = UDP-N-acetyl-alpha-D-muramoyl-L-alanine + ADP + phosphate + H(+). The protein operates within cell wall biogenesis; peptidoglycan biosynthesis. Cell wall formation. The chain is UDP-N-acetylmuramate--L-alanine ligase from Mycobacterium bovis (strain ATCC BAA-935 / AF2122/97).